We begin with the raw amino-acid sequence, 478 residues long: Sulfate adenylyltransferase subunit 1 (478 aa).

In terms of domain architecture, tr-type G spans 28-244 (KTMLRFLTCG…LESVDVVNAR (217 aa)). The G1 stretch occupies residues 37–44 (GSVDDGKS). A GTP-binding site is contributed by 37–44 (GSVDDGKS). The G2 stretch occupies residues 95–99 (GITID). The tract at residues 116 to 119 (DTPG) is G3. Residues 116–120 (DTPGH) and 171–174 (NKMD) contribute to the GTP site. The interval 171–174 (NKMD) is G4. The interval 209 to 211 (SAL) is G5.

The protein belongs to the TRAFAC class translation factor GTPase superfamily. Classic translation factor GTPase family. CysN/NodQ subfamily. As to quaternary structure, heterodimer composed of CysD, the smaller subunit, and CysN.

The catalysed reaction is sulfate + ATP + H(+) = adenosine 5'-phosphosulfate + diphosphate. It participates in sulfur metabolism; hydrogen sulfide biosynthesis; sulfite from sulfate: step 1/3. With CysD forms the ATP sulfurylase (ATPS) that catalyzes the adenylation of sulfate producing adenosine 5'-phosphosulfate (APS) and diphosphate, the first enzymatic step in sulfur assimilation pathway. APS synthesis involves the formation of a high-energy phosphoric-sulfuric acid anhydride bond driven by GTP hydrolysis by CysN coupled to ATP hydrolysis by CysD. The polypeptide is Sulfate adenylyltransferase subunit 1 (Yersinia pseudotuberculosis serotype O:1b (strain IP 31758)).